The sequence spans 378 residues: UDP-N-acetylenolpyruvoylglucosamine reductase (378 aa).

Residues 15–185 form the FAD-binding PCMH-type domain; it reads VGGTPERLLE…LSVDLELADH (171 aa). The active site involves arginine 163. Serine 248 (proton donor) is an active-site residue. Residue glutamate 370 is part of the active site.

Belongs to the MurB family. Requires FAD as cofactor.

Its subcellular location is the cytoplasm. The catalysed reaction is UDP-N-acetyl-alpha-D-muramate + NADP(+) = UDP-N-acetyl-3-O-(1-carboxyvinyl)-alpha-D-glucosamine + NADPH + H(+). The protein operates within cell wall biogenesis; peptidoglycan biosynthesis. Functionally, cell wall formation. The chain is UDP-N-acetylenolpyruvoylglucosamine reductase from Leifsonia xyli subsp. xyli (strain CTCB07).